The primary structure comprises 84 residues: Small ribosomal subunit protein uS17 (84 aa).

This sequence belongs to the universal ribosomal protein uS17 family. In terms of assembly, part of the 30S ribosomal subunit.

Its function is as follows. One of the primary rRNA binding proteins, it binds specifically to the 5'-end of 16S ribosomal RNA. The polypeptide is Small ribosomal subunit protein uS17 (Treponema pallidum (strain Nichols)).